The sequence spans 77 residues: U14-theraphotoxin-Cg1c (77 aa).

The signal sequence occupies residues 1–21 (MNTSDPPAVLRIAAITLLCTA). Residues 22-49 (SESVEQNPLIPFENAVLGSYAKMASEKR) constitute a propeptide that is removed on maturation. 2 disulfide bridges follow: Cys-50–Cys-64 and Cys-57–Cys-69.

This sequence belongs to the neurotoxin 10 (Hwtx-1) family. 65 (Jztx-21) subfamily. Expressed by the venom gland.

The protein localises to the secreted. Probable ion channel inhibitor. This Chilobrachys guangxiensis (Chinese earth tiger tarantula) protein is U14-theraphotoxin-Cg1c.